A 342-amino-acid polypeptide reads, in one-letter code: Succinylglutamate desuccinylase (342 aa).

Positions 64, 67, and 159 each coordinate Zn(2+). E222 is a catalytic residue.

Belongs to the AspA/AstE family. Succinylglutamate desuccinylase subfamily. Zn(2+) serves as cofactor.

It carries out the reaction N-succinyl-L-glutamate + H2O = L-glutamate + succinate. Its pathway is amino-acid degradation; L-arginine degradation via AST pathway; L-glutamate and succinate from L-arginine: step 5/5. In terms of biological role, transforms N(2)-succinylglutamate into succinate and glutamate. This is Succinylglutamate desuccinylase from Burkholderia orbicola (strain AU 1054).